The sequence spans 245 residues: Tetraspanin-16 (245 aa).

Residues 1–13 (MAEIHTPYSSLKK) lie on the Cytoplasmic side of the membrane. A helical membrane pass occupies residues 14 to 34 (LLSLLNGFVAVSGIILVGLGI). Residues 35–37 (GGK) are Extracellular-facing. A helical transmembrane segment spans residues 38–58 (CGGASLTNVLGLSSAYLLHVG). N59 is a topological domain (cytoplasmic). Residues 60 to 80 (LCLVMGCITVLLGCAGWYGAT) traverse the membrane as a helical segment. The Extracellular portion of the chain corresponds to 81–94 (KESRGTLLFCILSM). A helical membrane pass occupies residues 95 to 115 (VIVLIMEVTAATVVLLFFPIV). Topologically, residues 116–245 (GDVALEHTFV…VAQAGLELLA (130 aa)) are cytoplasmic.

This sequence belongs to the tetraspanin (TM4SF) family. As to expression, broadly expressed in most human tissues and cell lines including neural and bone marrow derived tissues.

Its subcellular location is the membrane. The polypeptide is Tetraspanin-16 (TSPAN16) (Homo sapiens (Human)).